Here is a 304-residue protein sequence, read N- to C-terminus: Porphobilinogen deaminase (304 aa).

An S-(dipyrrolylmethanemethyl)cysteine modification is found at Cys-240.

This sequence belongs to the HMBS family. Monomer. Dipyrromethane is required as a cofactor.

The enzyme catalyses 4 porphobilinogen + H2O = hydroxymethylbilane + 4 NH4(+). Its pathway is porphyrin-containing compound metabolism; protoporphyrin-IX biosynthesis; coproporphyrinogen-III from 5-aminolevulinate: step 2/4. Its function is as follows. Tetrapolymerization of the monopyrrole PBG into the hydroxymethylbilane pre-uroporphyrinogen in several discrete steps. The protein is Porphobilinogen deaminase of Xanthomonas axonopodis pv. citri (strain 306).